Consider the following 413-residue polypeptide: Tyrosine--tRNA ligase (413 aa).

Residue Tyr34 participates in L-tyrosine binding. The 'HIGH' region signature appears at 39–48; it reads PTSHSLTVGH. Positions 164 and 168 each coordinate L-tyrosine. A 'KMSKS' region motif is present at residues 225-229; it reads KFGKS. Lys228 lines the ATP pocket. The S4 RNA-binding domain maps to 347-413; it reads ILLVDALVQT…GKKNNALIVF (67 aa).

It belongs to the class-I aminoacyl-tRNA synthetase family. TyrS type 1 subfamily. Homodimer.

It is found in the cytoplasm. It catalyses the reaction tRNA(Tyr) + L-tyrosine + ATP = L-tyrosyl-tRNA(Tyr) + AMP + diphosphate + H(+). In terms of biological role, catalyzes the attachment of tyrosine to tRNA(Tyr) in a two-step reaction: tyrosine is first activated by ATP to form Tyr-AMP and then transferred to the acceptor end of tRNA(Tyr). This chain is Tyrosine--tRNA ligase, found in Aster yellows witches'-broom phytoplasma (strain AYWB).